The primary structure comprises 486 residues: Glycogen synthase (486 aa).

Position 20 (lysine 20) interacts with ADP-alpha-D-glucose.

The protein belongs to the glycosyltransferase 1 family. Bacterial/plant glycogen synthase subfamily.

It catalyses the reaction [(1-&gt;4)-alpha-D-glucosyl](n) + ADP-alpha-D-glucose = [(1-&gt;4)-alpha-D-glucosyl](n+1) + ADP + H(+). It participates in glycan biosynthesis; glycogen biosynthesis. Its function is as follows. Synthesizes alpha-1,4-glucan chains using ADP-glucose. The chain is Glycogen synthase from Aeromonas salmonicida (strain A449).